A 456-amino-acid chain; its full sequence is Bifunctional protein GlmU (456 aa).

The tract at residues 1 to 229 (MLNNAMSVVI…LSEVEGVNNR (229 aa)) is pyrophosphorylase. Residues 11 to 14 (LAAG), Lys-25, Gln-76, 81 to 82 (GT), 103 to 105 (YGD), Gly-140, Glu-154, Asn-169, and Asn-227 contribute to the UDP-N-acetyl-alpha-D-glucosamine site. Asp-105 lines the Mg(2+) pocket. Mg(2+) is bound at residue Asn-227. The tract at residues 230–250 (LQLSRLERVYQSEQAEKLLLA) is linker. Positions 251-456 (GVMLRDPARF…EGWRRPVKKK (206 aa)) are N-acetyltransferase. UDP-N-acetyl-alpha-D-glucosamine-binding residues include Arg-333 and Lys-351. Catalysis depends on His-363, which acts as the Proton acceptor. Residues Tyr-366 and Asn-377 each coordinate UDP-N-acetyl-alpha-D-glucosamine. Acetyl-CoA-binding positions include Ala-380, 386-387 (NY), Ser-405, Ala-423, and Arg-440.

This sequence in the N-terminal section; belongs to the N-acetylglucosamine-1-phosphate uridyltransferase family. In the C-terminal section; belongs to the transferase hexapeptide repeat family. Homotrimer. The cofactor is Mg(2+).

It localises to the cytoplasm. It carries out the reaction alpha-D-glucosamine 1-phosphate + acetyl-CoA = N-acetyl-alpha-D-glucosamine 1-phosphate + CoA + H(+). The catalysed reaction is N-acetyl-alpha-D-glucosamine 1-phosphate + UTP + H(+) = UDP-N-acetyl-alpha-D-glucosamine + diphosphate. The protein operates within nucleotide-sugar biosynthesis; UDP-N-acetyl-alpha-D-glucosamine biosynthesis; N-acetyl-alpha-D-glucosamine 1-phosphate from alpha-D-glucosamine 6-phosphate (route II): step 2/2. It functions in the pathway nucleotide-sugar biosynthesis; UDP-N-acetyl-alpha-D-glucosamine biosynthesis; UDP-N-acetyl-alpha-D-glucosamine from N-acetyl-alpha-D-glucosamine 1-phosphate: step 1/1. It participates in bacterial outer membrane biogenesis; LPS lipid A biosynthesis. In terms of biological role, catalyzes the last two sequential reactions in the de novo biosynthetic pathway for UDP-N-acetylglucosamine (UDP-GlcNAc). The C-terminal domain catalyzes the transfer of acetyl group from acetyl coenzyme A to glucosamine-1-phosphate (GlcN-1-P) to produce N-acetylglucosamine-1-phosphate (GlcNAc-1-P), which is converted into UDP-GlcNAc by the transfer of uridine 5-monophosphate (from uridine 5-triphosphate), a reaction catalyzed by the N-terminal domain. The chain is Bifunctional protein GlmU from Shigella dysenteriae serotype 1 (strain Sd197).